The primary structure comprises 167 residues: 6,7-dimethyl-8-ribityllumazine synthase (167 aa).

Residues F26, 60-62 (AFE), and 89-91 (AVI) each bind 5-amino-6-(D-ribitylamino)uracil. 94-95 (ET) contributes to the (2S)-2-hydroxy-3-oxobutyl phosphate binding site. Catalysis depends on H97, which acts as the Proton donor. F122 provides a ligand contact to 5-amino-6-(D-ribitylamino)uracil. R136 contributes to the (2S)-2-hydroxy-3-oxobutyl phosphate binding site.

This sequence belongs to the DMRL synthase family. As to quaternary structure, forms an icosahedral capsid composed of 60 subunits, arranged as a dodecamer of pentamers.

It catalyses the reaction (2S)-2-hydroxy-3-oxobutyl phosphate + 5-amino-6-(D-ribitylamino)uracil = 6,7-dimethyl-8-(1-D-ribityl)lumazine + phosphate + 2 H2O + H(+). The protein operates within cofactor biosynthesis; riboflavin biosynthesis; riboflavin from 2-hydroxy-3-oxobutyl phosphate and 5-amino-6-(D-ribitylamino)uracil: step 1/2. Catalyzes the formation of 6,7-dimethyl-8-ribityllumazine by condensation of 5-amino-6-(D-ribitylamino)uracil with 3,4-dihydroxy-2-butanone 4-phosphate. This is the penultimate step in the biosynthesis of riboflavin. In Vesicomyosocius okutanii subsp. Calyptogena okutanii (strain HA), this protein is 6,7-dimethyl-8-ribityllumazine synthase.